The sequence spans 141 residues: Large ribosomal subunit protein uL11 (141 aa).

Belongs to the universal ribosomal protein uL11 family. In terms of assembly, part of the ribosomal stalk of the 50S ribosomal subunit. Interacts with L10 and the large rRNA to form the base of the stalk. L10 forms an elongated spine to which L12 dimers bind in a sequential fashion forming a multimeric L10(L12)X complex. Post-translationally, one or more lysine residues are methylated.

Forms part of the ribosomal stalk which helps the ribosome interact with GTP-bound translation factors. The chain is Large ribosomal subunit protein uL11 from Roseiflexus castenholzii (strain DSM 13941 / HLO8).